The chain runs to 390 residues: Galactokinase (390 aa).

Residue 33 to 36 (EHTD) participates in substrate binding. ATP contacts are provided by residues Ser67 and 124–130 (GSGLSSS). Mg(2+) is bound by residues Ser130 and Glu162. Asp174 functions as the Proton acceptor in the catalytic mechanism. Substrate is bound at residue Tyr224.

Belongs to the GHMP kinase family. GalK subfamily.

The protein resides in the cytoplasm. The catalysed reaction is alpha-D-galactose + ATP = alpha-D-galactose 1-phosphate + ADP + H(+). It participates in carbohydrate metabolism; galactose metabolism. Its function is as follows. Catalyzes the transfer of the gamma-phosphate of ATP to D-galactose to form alpha-D-galactose-1-phosphate (Gal-1-P). The polypeptide is Galactokinase (Streptococcus mutans serotype c (strain ATCC 700610 / UA159)).